The following is a 232-amino-acid chain: Large ribosomal subunit protein uL1 (232 aa).

It belongs to the universal ribosomal protein uL1 family. As to quaternary structure, part of the 50S ribosomal subunit.

In terms of biological role, binds directly to 23S rRNA. The L1 stalk is quite mobile in the ribosome, and is involved in E site tRNA release. Protein L1 is also a translational repressor protein, it controls the translation of the L11 operon by binding to its mRNA. This Dichelobacter nodosus (strain VCS1703A) protein is Large ribosomal subunit protein uL1.